A 461-amino-acid chain; its full sequence is Serine/threonine-protein kinase ppk24, mitochondrial (461 aa).

One can recognise a Protein kinase domain in the interval 120–416; sequence FQHLKSIAKG…LDSILGTAWV (297 aa). Residues 126 to 134 and Lys-153 each bind ATP; that span reads IAKGATSTI. Asp-256 (proton acceptor) is an active-site residue.

This sequence belongs to the protein kinase superfamily. Ser/Thr protein kinase family.

The protein resides in the mitochondrion. It carries out the reaction L-seryl-[protein] + ATP = O-phospho-L-seryl-[protein] + ADP + H(+). The enzyme catalyses L-threonyl-[protein] + ATP = O-phospho-L-threonyl-[protein] + ADP + H(+). Functionally, has a role late in meiosis. In Schizosaccharomyces pombe (strain 972 / ATCC 24843) (Fission yeast), this protein is Serine/threonine-protein kinase ppk24, mitochondrial (ppk24).